An 878-amino-acid polypeptide reads, in one-letter code: Glycogen [starch] synthase (878 aa).

A UDP-alpha-D-glucose-binding site is contributed by K61. 2 disordered regions span residues 637-721 (PPKP…NVIP) and 746-878 (NEFK…KSLK). Low complexity-rich tracts occupy residues 641-656 (ISRS…LKLS) and 666-676 (QQQQQQQQPQP). Polar residues predominate over residues 677–692 (IGTTINLIPPSSNVSV). 4 stretches are compositionally biased toward low complexity: residues 693–715 (TPTT…ITTP), 746–781 (NEFK…AAAT), 795–830 (PNTS…NGKP), and 838–878 (TKSN…KSLK).

It belongs to the glycosyltransferase 3 family.

It catalyses the reaction [(1-&gt;4)-alpha-D-glucosyl](n) + UDP-alpha-D-glucose = [(1-&gt;4)-alpha-D-glucosyl](n+1) + UDP + H(+). Its pathway is glycan biosynthesis; glycogen biosynthesis. In terms of biological role, catalyzes the formation of apha-1,4 glycosidic bonds adding glucose residue from UDPG to the growing chain of glycogen. The protein is Glycogen [starch] synthase (glcS) of Dictyostelium discoideum (Social amoeba).